The primary structure comprises 315 residues: MKRKKIAIVGSGFTGQGTALFAAARDLGDIVLVDLPARENYAKGVALDMMEAMPVYGSDTRLVGTSDYAEIAGADVVVITAGVPRKPGMSREDLVNTNAGIVKDVAEKVARYAPDSVIIVLTNPVDSMTYVALKASGFPKNRVIGQSGVLDTARFRTFLANAIGCSFQDVVGCVLGGHGDDMVPLVRYTSAGGIPVEKLLPKETIDAIVERTRKGGGEIVNLMGTSAGYAPGMALVEMIDAILNDRKRILPSIAYLEGEYGYTDMCLGVMTVLGGGGLEKVIELDLTDEEKVALDKGAQGVRNLIEMLKAGILAQ.

Residues 10–15 (GSGFTG) and Asp-34 each bind NAD(+). Positions 85 and 91 each coordinate substrate. Residues Asn-98 and 121–123 (LTN) contribute to the NAD(+) site. Substrate-binding residues include Asn-123 and Arg-154. His-178 serves as the catalytic Proton acceptor.

This sequence belongs to the LDH/MDH superfamily. MDH type 3 family.

It catalyses the reaction (S)-malate + NAD(+) = oxaloacetate + NADH + H(+). Functionally, catalyzes the reversible oxidation of malate to oxaloacetate. This Symbiobacterium thermophilum (strain DSM 24528 / JCM 14929 / IAM 14863 / T) protein is Malate dehydrogenase.